The following is a 44-amino-acid chain: Iota-conotoxin-like R11.11 (44 aa).

Intrachain disulfides connect Cys5–Cys19, Cys12–Cys22, Cys18–Cys27, and Cys21–Cys36. Arg44 is a propeptide (removed by a carboxypeptidase).

This sequence belongs to the conotoxin I1 superfamily. Expressed by the venom duct.

The protein resides in the secreted. Functionally, iota-conotoxins bind to voltage-gated sodium channels (Nav) and act as agonists by shifting the voltage-dependence of activation to more hyperpolarized levels. Produces general excitatory symptoms. The protein is Iota-conotoxin-like R11.11 of Conus radiatus (Rayed cone).